We begin with the raw amino-acid sequence, 1149 residues long: Golgi apparatus protein 1 homolog (1149 aa).

The first 19 residues, 1 to 19, serve as a signal peptide directing secretion; sequence MWRFPLILASVCWLTTAQQ. The Extracellular segment spans residues 20-1115; sequence QNVANDPDKK…NLVMEHPERN (1096 aa). Cys-rich GLG1 repeat units follow at residues 24–69, 71–135, 139–207, 216–276, 277–344, 349–411, 415–475, 477–549, 551–610, 613–676, 677–736, 743–803, 809–867, 868–938, 945–1009, and 1010–1070; these read NDPD…FSET, TLSE…KNVT, KCHA…VKNA, ILGD…NDKF, MDPE…NQPE, QPSK…ESRN, KLGA…NVDS, DMVP…YDEQ, PLSV…ETDN, RKHP…DAKE, MNNK…FEHK, DLTD…IECL, HLGP…IVRL, LQRE…RQSI, DFSP…NKGL, and IRDK…DKQE. N-linked (GlcNAc...) asparagine glycosylation is present at Asn-133. Asn-411 is a glycosylation site (N-linked (GlcNAc...) asparagine). A helical membrane pass occupies residues 1116-1136; that stretch reads SILGYLAGFIVFILLIGCCCG. At 1137 to 1149 the chain is on the cytoplasmic side; that stretch reads RVSKKQYIEMKNR.

It is found in the membrane. This Caenorhabditis elegans protein is Golgi apparatus protein 1 homolog.